Consider the following 795-residue polypeptide: Phenylalanine--tRNA ligase beta subunit (795 aa).

The region spanning 39 to 148 is the tRNA-binding domain; sequence AGEFTGVKVG…EGTTLGADVR (110 aa). In terms of domain architecture, B5 spans 401–476; the sequence is PKANTVELRR…RIYGYNNIPN (76 aa). The Mg(2+) site is built by Asp454, Asp460, Glu463, and Glu464. The FDX-ACB domain occupies 701-794; it reads SKFPANRRDI…IGEKFSATLR (94 aa).

Belongs to the phenylalanyl-tRNA synthetase beta subunit family. Type 1 subfamily. In terms of assembly, tetramer of two alpha and two beta subunits. The cofactor is Mg(2+).

The protein resides in the cytoplasm. It carries out the reaction tRNA(Phe) + L-phenylalanine + ATP = L-phenylalanyl-tRNA(Phe) + AMP + diphosphate + H(+). The chain is Phenylalanine--tRNA ligase beta subunit from Aliivibrio fischeri (strain ATCC 700601 / ES114) (Vibrio fischeri).